The sequence spans 402 residues: Homoserine O-acetyltransferase (402 aa).

A compositionally biased stretch (polar residues) spans 1–17 (MDWQTTSADTAPSSFIT). Residues 1-39 (MDWQTTSADTAPSSFITEEQDRSLFGKPPASGAWKESDP) form a disordered region. Positions 78–388 (NAVLVLHALT…HFGHDGFLIE (311 aa)) constitute an AB hydrolase-1 domain. The active-site Nucleophile is serine 183. Arginine 255 is a binding site for substrate. Active-site residues include aspartate 349 and histidine 382. Aspartate 383 provides a ligand contact to substrate.

It belongs to the AB hydrolase superfamily. MetX family. In terms of assembly, homodimer.

It localises to the cytoplasm. It carries out the reaction L-homoserine + acetyl-CoA = O-acetyl-L-homoserine + CoA. Its pathway is amino-acid biosynthesis; L-methionine biosynthesis via de novo pathway; O-acetyl-L-homoserine from L-homoserine: step 1/1. In terms of biological role, transfers an acetyl group from acetyl-CoA to L-homoserine, forming acetyl-L-homoserine. The sequence is that of Homoserine O-acetyltransferase from Leifsonia xyli subsp. xyli (strain CTCB07).